Consider the following 280-residue polypeptide: MNDRSSRRRTMKDDETFEISIPFDEAPHLDPQIFYSLSPSRRNFEEPPEAASSALALMNSVKTQLHMALERNSWLQKRIEDLEEERDFLRCQLDKFISSARMEAEDHCRMKPGPRRMEGDSRGGAGGEASDPESAASSLSGASEEGSASERRRQKQKGGASRRRFGKPKARERQRVKDADGVLCRYKKILGTFQKLKSMSRAFEHHRVDRNTVALTTPIAELLIVAPEKLAEVGEFDPSKERLLEYSRRCFLALDDETLKKVQALKKSKLLLPITYRFKR.

Residues threonine 63 to arginine 101 adopt a coiled-coil conformation. Basic and acidic residues predominate over residues glutamate 103–serine 121. The tract at residues glutamate 103–valine 176 is disordered. Phosphoserine is present on serine 130. A compositionally biased stretch (low complexity) spans glutamate 133–glycine 146. Residues arginine 151 to arginine 164 carry the Bipartite nuclear localization signal motif. The segment covering arginine 152–proline 168 has biased composition (basic residues).

As to quaternary structure, interacts with p53/TP53.

It localises to the nucleus. Its function is as follows. Promotes the degradation of p53/TP53 protein and inhibits its transactivity. In Homo sapiens (Human), this protein is Coiled-coil domain-containing protein 106 (CCDC106).